Consider the following 710-residue polypeptide: Choline transporter-like protein 2 (710 aa).

Over 1 to 34 (MEDDGKSPPDSAYGEPKKYDPNFKGPIQNRGCTD) the chain is Cytoplasmic. The chain crosses the membrane as a helical span at residues 35–55 (ILCCILIVLGIIAYVAVGIVA). Topologically, residues 56–236 (WTYGDPRKVI…KIFEDYTVSW (181 aa)) are extracellular. Residues Asn-147, Asn-190, and Asn-204 are each glycosylated (N-linked (GlcNAc...) asparagine). The helical transmembrane segment at 237–257 (YWIIIGLIIAMVISLIFVVLL) threads the bilayer. At 258-260 (RFL) the chain is on the cytoplasmic side. A helical membrane pass occupies residues 261-281 (AGIMVWVMIVLVIAVMGYGIF). Residues 282 to 319 (HCYMEYARLKGQSGSDVTLKDIGFQTDIRVYLHLRQTW) are Extracellular-facing. Residues 320-340 (LAFMIILCILEVIVILLLIFL) form a helical membrane-spanning segment. At 341–368 (RKRIMIAIALIKEASRAVGFVMSSLVFP) the chain is on the cytoplasmic side. A helical membrane pass occupies residues 369–389 (LFTFLLVCLCIAYWAITAVFL). The Extracellular segment spans residues 390 to 458 (STSNEAVYKV…FQIYNAFMFL (69 aa)). N-linked (GlcNAc...) asparagine glycosylation is found at Asn-401, Asn-418, and Asn-421. Residues 459–481 (WLANFVIALGQVTLAGAFASYYW) form a helical membrane-spanning segment. Residues 482–508 (AFKKPDDMPAFPIFSSLGRALRYHTGS) are Cytoplasmic-facing. A helical membrane pass occupies residues 509–529 (LAFGSLILAIVQMIRILLEYL). Residues 530 to 567 (DHKLKGADNKCARFLLCCLKCCFWCLEKFIKFLNRNAY) lie on the Extracellular side of the membrane. The helical transmembrane segment at 568-588 (IMIAIYGTNFCTSARNAFFLL) threads the bilayer. Over 589 to 603 (MRNIIRVAVLDKVTD) the chain is Cytoplasmic. A helical membrane pass occupies residues 604 to 624 (FLLFLGKLLVVGCVGILAFFF). Residues 625–642 (FSRRIQIVQDTAPTLNYY) are Extracellular-facing. Residues 643-663 (WVPILTVILGSYLIAHGFFSV) traverse the membrane as a helical segment. Topologically, residues 664–710 (YGMCVDTLFLCFLEDLERNDGSTERPYFMSGSLQKLLNKSNQTKPDK) are cytoplasmic.

It belongs to the CTL (choline transporter-like) family.

Its subcellular location is the cell membrane. The protein resides in the mitochondrion outer membrane. It carries out the reaction choline(out) + n H(+)(in) = choline(in) + n H(+)(out). It catalyses the reaction ethanolamine(out) + n H(+)(in) = ethanolamine(in) + n H(+)(out). Choline/H+ antiporter, mainly in mitochodria. Also acts as a low-affinity ethanolamine/H+ antiporter, regulating the supply of extracellular ethanolamine (Etn) for the CDP-Etn pathway, redistribute intracellular Etn and balance the CDP-Cho and CDP-Etn arms of the Kennedy pathway. The chain is Choline transporter-like protein 2 (slc44a2) from Xenopus laevis (African clawed frog).